A 190-amino-acid polypeptide reads, in one-letter code: 3-isopropylmalate dehydratase small subunit (190 aa).

Belongs to the LeuD family. LeuD type 1 subfamily. As to quaternary structure, heterodimer of LeuC and LeuD.

It carries out the reaction (2R,3S)-3-isopropylmalate = (2S)-2-isopropylmalate. The protein operates within amino-acid biosynthesis; L-leucine biosynthesis; L-leucine from 3-methyl-2-oxobutanoate: step 2/4. In terms of biological role, catalyzes the isomerization between 2-isopropylmalate and 3-isopropylmalate, via the formation of 2-isopropylmaleate. This chain is 3-isopropylmalate dehydratase small subunit, found in Staphylococcus aureus (strain USA300).